The chain runs to 605 residues: Dihydrogeodin oxidase (605 aa).

The first 18 residues, 1 to 18, serve as a signal peptide directing secretion; it reads MPSLKDWVVAGLVPMTIA. Residues Asn-27, Asn-107, and Asn-112 are each glycosylated (N-linked (GlcNAc...) asparagine). 3 consecutive Plastocyanin-like domains span residues 65–183, 189–347, and 424–567; these read TVTQ…GPSS, DLGP…YDES, and YVDW…KIKP. Cu cation is bound by residues His-117, His-119, His-161, and His-163. N-linked (GlcNAc...) asparagine glycans are attached at residues Asn-278 and Asn-467. Positions 484, 487, 489, 543, 544, 545, and 549 each coordinate Cu cation.

The protein belongs to the multicopper oxidase family. It depends on Cu cation as a cofactor.

The enzyme catalyses 2 dihydrogeodin + O2 + 2 H(+) = 2 (+)-geodin + 2 H2O. The protein operates within secondary metabolite biosynthesis. Dihydrogeodin oxidase; part of the gene cluster that mediates the biosynthesis of geodin, an intermediate in the biosynthesis of other natural products. The pathway begins with the synthesis of atrochrysone thioester by the polyketide synthase (PKS) gedC. The atrochrysone carboxyl ACP thioesterase gedB then breaks the thioester bond and releases the atrochrysone carboxylic acid from gedC. The atrochrysone carboxylic acid is then converted to atrochrysone which is further transformed into emodinanthrone. The next step is performed by the emodinanthrone oxygenase gedH that catalyzes the oxidation of emodinanthrone to emodin. Emodin O-methyltransferase encoded probably by gedA then catalyzes methylation of the 8-hydroxy group of emodin to form questin. Ring cleavage of questin by questin oxidase gedK leads to desmethylsulochrin via several intermediates including questin epoxide. Another methylation step probably catalyzed by methyltransferase gedG leads to the formation of sulochrin which is further converted to dihydrogeodin by the sulochrin halogenase gedL. Finally, the dihydrogeodin oxidase gedJ catalyzes the stereospecific phenol oxidative coupling reaction converting dihydrogeodin to geodin. The sequence is that of Dihydrogeodin oxidase from Aspergillus terreus (strain NIH 2624 / FGSC A1156).